We begin with the raw amino-acid sequence, 131 residues long: M-zodatoxin-Lt8o (131 aa).

The signal sequence occupies residues 1-20 (MKYFVVALALVAAFACIAES). A propeptide spanning residues 21-60 (KPAESEHELAEVEEENELADLEDAVWLEHLADLSDLEEAR) is cleaved from the precursor.

The protein belongs to the cationic peptide 06 (cytoinsectotoxin) family. Expressed by the venom gland.

Its subcellular location is the secreted. Functionally, insecticidal, cytolytic and antimicrobial peptide. Forms voltage-dependent, ion-permeable channels in membranes. At high concentration causes cell membrane lysis. This Lachesana tarabaevi (Spider) protein is M-zodatoxin-Lt8o (cit 1-14).